The following is a 263-amino-acid chain: Purine nucleoside phosphorylase SAV1187 (263 aa).

3 residues coordinate Zn(2+): His-79, Cys-124, and His-141.

The protein belongs to the purine nucleoside phosphorylase YfiH/LACC1 family. Homodimer. Cu(2+) serves as cofactor. The cofactor is Zn(2+).

It carries out the reaction adenosine + phosphate = alpha-D-ribose 1-phosphate + adenine. The catalysed reaction is S-methyl-5'-thioadenosine + phosphate = 5-(methylsulfanyl)-alpha-D-ribose 1-phosphate + adenine. It catalyses the reaction inosine + phosphate = alpha-D-ribose 1-phosphate + hypoxanthine. The enzyme catalyses adenosine + H2O + H(+) = inosine + NH4(+). Its function is as follows. Purine nucleoside enzyme that catalyzes the phosphorolysis of adenosine and inosine nucleosides, yielding D-ribose 1-phosphate and the respective free bases, adenine and hypoxanthine. Also catalyzes the phosphorolysis of S-methyl-5'-thioadenosine into adenine and S-methyl-5-thio-alpha-D-ribose 1-phosphate. Also has adenosine deaminase activity. This is Purine nucleoside phosphorylase SAV1187 from Staphylococcus aureus (strain Mu50 / ATCC 700699).